Consider the following 305-residue polypeptide: Acetyl-coenzyme A carboxylase carboxyl transferase subunit beta (305 aa).

Positions 27–296 (LWVKCSSCRE…SPAKAELAGR (270 aa)) constitute a CoA carboxyltransferase N-terminal domain. Residues C31, C34, C50, and C53 each coordinate Zn(2+). The C4-type zinc-finger motif lies at 31–53 (CSSCRELIYKKQLNDNLKVCPKC).

This sequence belongs to the AccD/PCCB family. Acetyl-CoA carboxylase is a heterohexamer composed of biotin carboxyl carrier protein (AccB), biotin carboxylase (AccC) and two subunits each of ACCase subunit alpha (AccA) and ACCase subunit beta (AccD). Zn(2+) serves as cofactor.

It is found in the cytoplasm. It catalyses the reaction N(6)-carboxybiotinyl-L-lysyl-[protein] + acetyl-CoA = N(6)-biotinyl-L-lysyl-[protein] + malonyl-CoA. It participates in lipid metabolism; malonyl-CoA biosynthesis; malonyl-CoA from acetyl-CoA: step 1/1. In terms of biological role, component of the acetyl coenzyme A carboxylase (ACC) complex. Biotin carboxylase (BC) catalyzes the carboxylation of biotin on its carrier protein (BCCP) and then the CO(2) group is transferred by the transcarboxylase to acetyl-CoA to form malonyl-CoA. This is Acetyl-coenzyme A carboxylase carboxyl transferase subunit beta from Chloroflexus aurantiacus (strain ATCC 29366 / DSM 635 / J-10-fl).